Reading from the N-terminus, the 104-residue chain is Protein E7 (104 aa).

Residues 1-47 form an E7 terminal domain region; it reads MHGDTINIQDVILDLVPQPEIDLQCYEQLDYEQFDSSEEDETDNVRN. Positions 23–27 match the LXCXE motif; interaction with host RB1 and TMEM173/STING motif; the sequence is LQCYE. A zinc finger spans residues 65–101; that stretch reads CCVCNSIVQLAVLSSRQNVRAVEQLLMGDVSLVCHQC. A Nuclear export signal motif is present at residues 83–91; the sequence is VRAVEQLLM.

Belongs to the papillomaviridae E7 protein family. Homodimer. Homooligomer. Interacts with host RB1; this interaction induces dissociation of RB1-E2F1 complex thereby disrupting RB1 activity. Interacts with host EP300; this interaction represses EP300 transcriptional activity. Interacts with protein E2; this interaction inhibits E7 oncogenic activity. Interacts with host TMEM173/STING; this interaction impairs the ability of TMEM173/STING to sense cytosolic DNA and promote the production of type I interferon (IFN-alpha and IFN-beta). In terms of processing, highly phosphorylated.

Its subcellular location is the host cytoplasm. It is found in the host nucleus. In terms of biological role, plays a role in viral genome replication by driving entry of quiescent cells into the cell cycle. Stimulation of progression from G1 to S phase allows the virus to efficiently use the cellular DNA replicating machinery to achieve viral genome replication. E7 protein has both transforming and trans-activating activities. Induces the disassembly of the E2F1 transcription factor from RB1, with subsequent transcriptional activation of E2F1-regulated S-phase genes. Interferes with host histone deacetylation mediated by HDAC1 and HDAC2, leading to transcription activation. Also plays a role in the inhibition of both antiviral and antiproliferative functions of host interferon alpha. Interaction with host TMEM173/STING impairs the ability of TMEM173/STING to sense cytosolic DNA and promote the production of type I interferon (IFN-alpha and IFN-beta). This Homo sapiens (Human) protein is Protein E7.